The sequence spans 318 residues: Mitochondrial thiamine pyrophosphate carrier (318 aa).

3 Solcar repeats span residues 13–106 (NSKL…LTEL), 116–202 (HQFS…LKRA), and 214–309 (TGNL…FCNL). Helical transmembrane passes span 19-39 (AVAG…LDVI), 87-107 (ILSI…TELL), 122-142 (FVCG…VDVL), 173-193 (VFYK…GLQF), and 220-240 (LLCG…LDLI). Positions 241–246 (KKRLQV) match the Substrate recognition motif. Residues 293–313 (ALSTGFMFFWYELFCNLFHCI) traverse the membrane as a helical segment.

The protein belongs to the mitochondrial carrier (TC 2.A.29) family.

It is found in the mitochondrion membrane. The catalysed reaction is thiamine phosphate(out) + thiamine diphosphate(in) = thiamine phosphate(in) + thiamine diphosphate(out). In terms of biological role, mitochondrial transporter mediating uptake of thiamine diphosphate into mitochondria. It is not clear if the antiporter activity is affected by the membrane potential or by the proton electrochemical gradient. The chain is Mitochondrial thiamine pyrophosphate carrier (Slc25a19) from Mus musculus (Mouse).